The primary structure comprises 469 residues: Aspartyl/glutamyl-tRNA(Asn/Gln) amidotransferase subunit B (469 aa).

The protein belongs to the GatB/GatE family. GatB subfamily. Heterotrimer of A, B and C subunits.

It catalyses the reaction L-glutamyl-tRNA(Gln) + L-glutamine + ATP + H2O = L-glutaminyl-tRNA(Gln) + L-glutamate + ADP + phosphate + H(+). The catalysed reaction is L-aspartyl-tRNA(Asn) + L-glutamine + ATP + H2O = L-asparaginyl-tRNA(Asn) + L-glutamate + ADP + phosphate + 2 H(+). Allows the formation of correctly charged Asn-tRNA(Asn) or Gln-tRNA(Gln) through the transamidation of misacylated Asp-tRNA(Asn) or Glu-tRNA(Gln) in organisms which lack either or both of asparaginyl-tRNA or glutaminyl-tRNA synthetases. The reaction takes place in the presence of glutamine and ATP through an activated phospho-Asp-tRNA(Asn) or phospho-Glu-tRNA(Gln). The sequence is that of Aspartyl/glutamyl-tRNA(Asn/Gln) amidotransferase subunit B from Thermus thermophilus (strain ATCC 27634 / DSM 579 / HB8).